The following is a 136-amino-acid chain: Small ribosomal subunit protein uS9 (136 aa).

The segment at 97 to 136 (SPDNRKPLKTEGHLSRDPRAKERRKYGLKKARKAPQFSKR) is disordered. Residues 98–116 (PDNRKPLKTEGHLSRDPRA) show a composition bias toward basic and acidic residues. The span at 117–136 (KERRKYGLKKARKAPQFSKR) shows a compositional bias: basic residues.

The protein belongs to the universal ribosomal protein uS9 family.

The polypeptide is Small ribosomal subunit protein uS9 (Prochlorococcus marinus (strain AS9601)).